The sequence spans 256 residues: NAD-dependent protein deacylase 4 (256 aa).

Positions 1 to 250 constitute a Deacetylase sirtuin-type domain; that stretch reads MRLPAEALKD…AKIHESLSTG (250 aa). NAD(+) is bound at residue 19–39; sequence GAGISAESGILTYLDQMPKLW. Tyr-64 and Arg-67 together coordinate substrate. 98-101 contributes to the NAD(+) binding site; sequence QNVD. The active-site Proton acceptor is His-116. Cys-124, Cys-127, Cys-152, and Cys-155 together coordinate Zn(2+). NAD(+)-binding positions include 192 to 194, 218 to 220, and Ala-236; these read GTS and NTV.

This sequence belongs to the sirtuin family. Class III subfamily. Requires Zn(2+) as cofactor.

The protein localises to the cytoplasm. The enzyme catalyses N(6)-acetyl-L-lysyl-[protein] + NAD(+) + H2O = 2''-O-acetyl-ADP-D-ribose + nicotinamide + L-lysyl-[protein]. It catalyses the reaction N(6)-succinyl-L-lysyl-[protein] + NAD(+) + H2O = 2''-O-succinyl-ADP-D-ribose + nicotinamide + L-lysyl-[protein]. In terms of biological role, NAD-dependent lysine deacetylase and desuccinylase that specifically removes acetyl and succinyl groups on target proteins. Modulates the activities of several proteins which are inactive in their acylated form. This Pseudomonas syringae pv. tomato (strain ATCC BAA-871 / DC3000) protein is NAD-dependent protein deacylase 4.